The sequence spans 282 residues: NADPH-dependent 7-cyano-7-deazaguanine reductase (282 aa).

88–90 (IES) is a binding site for substrate. An NADPH-binding site is contributed by 90-91 (SK). The active-site Thioimide intermediate is Cys-190. Asp-197 serves as the catalytic Proton donor. 229–230 (HE) lines the substrate pocket. 258–259 (RG) provides a ligand contact to NADPH.

The protein belongs to the GTP cyclohydrolase I family. QueF type 2 subfamily. Homodimer.

Its subcellular location is the cytoplasm. The catalysed reaction is 7-aminomethyl-7-carbaguanine + 2 NADP(+) = 7-cyano-7-deazaguanine + 2 NADPH + 3 H(+). It participates in tRNA modification; tRNA-queuosine biosynthesis. Functionally, catalyzes the NADPH-dependent reduction of 7-cyano-7-deazaguanine (preQ0) to 7-aminomethyl-7-deazaguanine (preQ1). This Escherichia coli O157:H7 protein is NADPH-dependent 7-cyano-7-deazaguanine reductase.